The following is a 580-amino-acid chain: Glutathione hydrolase proenzyme (580 aa).

Residues 1 to 25 (MIKPTFLRRVAIAALLSGSCFSAAA) form the signal peptide. Arginine 114 is an L-glutamate binding site. The active-site Nucleophile is threonine 391. Residues threonine 409, asparagine 411, glutamine 430, aspartate 433, 462–463 (SS), and 483–484 (GG) contribute to the L-glutamate site. The disordered stretch occupies residues 561–580 (DGELYGASDPRSVDDLTAGY).

The protein belongs to the gamma-glutamyltransferase family. This enzyme consists of two polypeptide chains, which are synthesized in precursor form from a single polypeptide. Cleaved by autocatalysis into a large and a small subunit.

It is found in the periplasm. The enzyme catalyses an N-terminal (5-L-glutamyl)-[peptide] + an alpha-amino acid = 5-L-glutamyl amino acid + an N-terminal L-alpha-aminoacyl-[peptide]. It catalyses the reaction glutathione + H2O = L-cysteinylglycine + L-glutamate. The catalysed reaction is an S-substituted glutathione + H2O = an S-substituted L-cysteinylglycine + L-glutamate. The protein operates within sulfur metabolism; glutathione metabolism. Its activity is regulated as follows. Transferase and hydrolase activities are inhibited by L-Ala and L-Gln, and also by GGT affinity labeling reagents such as azaserine and 6-diazo-5-oxo-nor-leucine. Functionally, cleaves the gamma-glutamyl bond of periplasmic glutathione (gamma-Glu-Cys-Gly), glutathione conjugates, and other gamma-glutamyl compounds. The metabolism of glutathione releases free glutamate and the dipeptide cysteinyl-glycine, which is hydrolyzed to cysteine and glycine by dipeptidases; it may function in amino acid uptake/salvage, or possibly in peptidoglycan linkage. Catalyzes the hydrolysis and transpeptidation of many gamma-glutamyl compounds (including some D-gamma-glutamyl substrates), with a preference for basic and aromatic amino acids as acceptors. The KM values for gamma-glutamyl acceptors are so high that it has been proposed transpeptidation is not the physiological role in E.coli. The sequence is that of Glutathione hydrolase proenzyme (ggt) from Escherichia coli (strain K12).